A 997-amino-acid polypeptide reads, in one-letter code: NLR family CARD domain-containing protein 4 (997 aa).

In terms of domain architecture, CARD spans 1 to 88 (MDLIRKNYAE…FFYEDLIGQR (88 aa)). The segment at 95 to 300 (EEDLENLADH…RCGALIAETS (206 aa)) is nucleotide-binding domain (NBD). In terms of domain architecture, NACHT spans 165–478 (SPCVIEGEAG…VTKGEDFLNK (314 aa)). 171–178 (GEAGKGKT) provides a ligand contact to ATP. Residues 358 to 465 (MNTQTTLFST…RLSQLLSSED (108 aa)) are winged-helix domain (WHD). 12 LRR repeats span residues 550–570 (LFSEKCLYINSHNISSHHIEF), 629–652 (NQSIQTLEVTLRDFHQLNKKDIKY), 708–731 (MTEMKTLSILNLHSEHLQGGLLEG), 735–758 (LVGLEKLVFHNIKIDKNDAKTLAE), 760–785 (ILSLKKLKRLSISHISNIGDGMESIA), 797–820 (ELKLIDCCLSAKALRSLGQSLYSL), 821–843 (SHIEILDLSGNYLLEEGKESVEE), 851–875 (LDAIRTLMLPGGTDVKFCLEAVLPT), 884–905 (ELAFKRWNLTNDDLMTLASYIN), 908–935 (FENLSFLDLSDNCAQSAGWLSLTAILQY), 937–958 (PNLTYVNFSTEDLFTPDPDLVR), and 972–994 (TMELNNWQLDDFDLAQIKKAKNM).

The protein resides in the cytoplasm. Its subcellular location is the cytosol. In terms of biological role, key component of inflammasomes that indirectly senses specific proteins from pathogenic bacteria and fungi and responds by assembling an inflammasome complex that promotes caspase-1 activation, cytokine production and macrophage pyroptosis. The sequence is that of NLR family CARD domain-containing protein 4 (nlrc4) from Xenopus tropicalis (Western clawed frog).